Consider the following 467-residue polypeptide: Cilia- and flagella-associated protein 97 (467 aa).

4 disordered regions span residues 1 to 20, 76 to 235, 336 to 370, and 412 to 467; these read MDRYGNLSDDGEVDHSFFDS, IAKP…DISP, RQAAKPRSKSLTPKKPMSAPTRLYHSAINRQKEQQ, and ALSP…AAWQ. The span at 124–135 shows a compositional bias: acidic residues; the sequence is DNYYPDEEDSSE. Polar residues predominate over residues 162-177; sequence DFVSTISSSDTEYSDT. Residues 180–194 show a composition bias toward low complexity; that stretch reads DDGASKSSYQSSKGS. Positions 198–216 are enriched in basic and acidic residues; the sequence is SPERKPSRSSMRELRHYAE. Residues 223–235 show a composition bias toward polar residues; the sequence is TDVTPLSTPDISP. Residues 310–387 are a coiled coil; the sequence is KKNFSFSNDE…ALLKRLESVK (78 aa). Low complexity predominate over residues 421–439; it reads SVSRLSPSVSSGGFSRMSS.

Belongs to the CFAP97 family.

This is Cilia- and flagella-associated protein 97 from Xenopus tropicalis (Western clawed frog).